The chain runs to 176 residues: Cytochrome b (176 aa).

The next 3 helical transmembrane spans lie at 33–53, 77–98, and 113–133; these read FGSL…FLAM, WLIR…FLHV, and WNIG…GYVL. Residues His83 and His97 each coordinate heme b.

Belongs to the cytochrome b family. As to quaternary structure, the cytochrome bc1 complex contains 11 subunits: 3 respiratory subunits (MT-CYB, CYC1 and UQCRFS1), 2 core proteins (UQCRC1 and UQCRC2) and 6 low-molecular weight proteins (UQCRH/QCR6, UQCRB/QCR7, UQCRQ/QCR8, UQCR10/QCR9, UQCR11/QCR10 and a cleavage product of UQCRFS1). This cytochrome bc1 complex then forms a dimer. Heme b serves as cofactor.

The protein resides in the mitochondrion inner membrane. Functionally, component of the ubiquinol-cytochrome c reductase complex (complex III or cytochrome b-c1 complex) that is part of the mitochondrial respiratory chain. The b-c1 complex mediates electron transfer from ubiquinol to cytochrome c. Contributes to the generation of a proton gradient across the mitochondrial membrane that is then used for ATP synthesis. This is Cytochrome b (MT-CYB) from Sciurus carolinensis (Eastern gray squirrel).